A 675-amino-acid polypeptide reads, in one-letter code: Transmembrane protein 232 (675 aa).

The helical transmembrane segment at 163-183 (LVKIGYLIFLRLFVFFLHGHL) threads the bilayer. Residues 598–634 (WQKDMEARKREEEAYKAQNQKDKEEKEKIHFQEIMKQ) adopt a coiled-coil conformation. The interval 605 to 624 (RKREEEAYKAQNQKDKEEKE) is disordered.

In terms of tissue distribution, high expression in the testis and weak expression levels in the spleen, liver, brain, uterus, lung, epididymis and kidney. Not detected in the heart or ovary.

It is found in the membrane. Its function is as follows. Plays a critical role for male fertility and sperm motility by regulating sperm cytoplasm removal and maintaining axoneme integrity. In Mus musculus (Mouse), this protein is Transmembrane protein 232 (Tmem232).